The primary structure comprises 1862 residues: Protein RRP5 homolog (1862 aa).

The segment at 1-56 is disordered; it reads MANLEESFPRGGTRKLHKSEKSSQQVVEQDNLFDVSTEEGPIKRKKSQKGPAKTKK. At A2 the chain carries N-acetylalanine. S7 is modified (phosphoserine). Over residues 43 to 56 the composition is skewed to basic residues; sequence KRKKSQKGPAKTKK. S1 motif domains follow at residues 83–171, 187–258, 281–346, and 365–436; these read GMRI…LSVN, GMLL…LSVE, GLLV…LSLR, and GAVL…LSLR. At S438 the chain carries Phosphoserine. S1 motif domains are found at residues 453–522, 542–611, 636–707, 729–798, and 846–911; these read GTVV…MTLK, GLQT…LSFR, GQLV…LCRK, GMLL…LSLR, and GMVL…VSLH. Residues 999-1036 are disordered; that stretch reads SKRTRMPVQRDSETVDDKGEEKEEEEEEEEKEEENLTV. Residues 1006–1019 are compositionally biased toward basic and acidic residues; that stretch reads VQRDSETVDDKGEE. Positions 1020 to 1033 are enriched in acidic residues; the sequence is KEEEEEEEEKEEEN. 4 S1 motif domains span residues 1047–1120, 1160–1233, 1241–1309, and 1335–1407; these read GDKV…ISHP, GQTV…LSLI, GEVA…LSLR, and GQLL…LSLL. Disordered regions lie at residues 1406–1520 and 1545–1577; these read LLPS…STEV and REES…KAEK. Basic and acidic residues-rich tracts occupy residues 1423-1437 and 1445-1454; these read PKQE…EGQK and RREEKEEPQK. Residue K1424 forms a Glycyl lysine isopeptide (Lys-Gly) (interchain with G-Cter in SUMO2) linkage. Phosphoserine occurs at positions 1468 and 1490. Over residues 1566-1577 the composition is skewed to basic and acidic residues; sequence KERELEKQKAEK. HAT repeat units lie at residues 1590–1622, 1696–1728, 1766–1798, and 1800–1835; these read GRQP…FHLQ, EKYK…FVLG, GDVE…MTIK, and GSQT…YEKQ.

In terms of assembly, interacts with NF-kappa-B p50/NFKB1 and NF-kappa-B p65/RELA. In terms of tissue distribution, ubiquitous.

The protein localises to the nucleus. Its subcellular location is the nucleolus. Functionally, essential for the generation of mature 18S rRNA, specifically necessary for cleavages at sites A0, 1 and 2 of the 47S precursor. Directly interacts with U3 snoRNA. This chain is Protein RRP5 homolog (Pdcd11), found in Mus musculus (Mouse).